The chain runs to 322 residues: RNA-binding protein KhpB (322 aa).

A jag_N domain region spans residues V3–T52. Positions A58–A82 are enriched in low complexity. Residues A58 to T162 form a disordered region. A Phosphothreonine modification is found at T89. Residues T89–R99 show a composition bias toward polar residues. The segment covering Q100 to V129 has biased composition (low complexity). Polar residues predominate over residues S141–R161. The KH domain maps to E174 to V251. Residues E256–K322 enclose the R3H domain.

Forms a complex with KhpA.

Its subcellular location is the cytoplasm. In terms of biological role, a probable RNA chaperone. Forms a complex with KhpA which binds to cellular RNA and controls its expression. Plays a role in peptidoglycan (PG) homeostasis and cell length regulation. Functionally, necessary for correct cell elongation. In Lactiplantibacillus plantarum (strain ATCC BAA-793 / NCIMB 8826 / WCFS1) (Lactobacillus plantarum), this protein is RNA-binding protein KhpB.